The chain runs to 87 residues: Small ribosomal subunit protein bS20 (87 aa).

Residues 1–26 (MANIKSAKKRAIQSEKRRKHNASRRS) form a disordered region.

This sequence belongs to the bacterial ribosomal protein bS20 family.

Its function is as follows. Binds directly to 16S ribosomal RNA. In Photorhabdus laumondii subsp. laumondii (strain DSM 15139 / CIP 105565 / TT01) (Photorhabdus luminescens subsp. laumondii), this protein is Small ribosomal subunit protein bS20.